The sequence spans 98 residues: NADH-ubiquinone oxidoreductase chain 4L (98 aa).

A run of 3 helical transmembrane segments spans residues 1-21 (MIPTYMNIMLAFTISLLGMLT), 27-47 (VASLLCLEGMTMSLFIMTALI), and 61-81 (IILLVFAACEAAVGLALLISI).

It belongs to the complex I subunit 4L family. As to quaternary structure, core subunit of respiratory chain NADH dehydrogenase (Complex I) which is composed of 45 different subunits.

The protein localises to the mitochondrion inner membrane. It carries out the reaction a ubiquinone + NADH + 5 H(+)(in) = a ubiquinol + NAD(+) + 4 H(+)(out). In terms of biological role, core subunit of the mitochondrial membrane respiratory chain NADH dehydrogenase (Complex I) which catalyzes electron transfer from NADH through the respiratory chain, using ubiquinone as an electron acceptor. Part of the enzyme membrane arm which is embedded in the lipid bilayer and involved in proton translocation. The protein is NADH-ubiquinone oxidoreductase chain 4L (MT-ND4L) of Macaca sylvanus (Barbary macaque).